Reading from the N-terminus, the 400-residue chain is MGGWSSKPRKGMGTNLSVPNPLGFFPDHQLDPVFGANSNNPDWDFNPIKDHWPAANQVGVGAFGPGFTPPHGGVLGWSPQAQGMLTPVSTIPPPASANRQSGRQPTPISPPLRDSHPQAMQWNSTAFHQALQDPRVRGLYFPAGGSSSGTVNPAPNIASHISSISARTGDPVTNMENITSGFLGPLPVLQAGFFLLTRILTIPQSLDSWWTSLNFLGGSPVCLGQNSRSPTSNHSPTSCPPICPGYRWMCLRRFIIFLFILLLCLIFLLVLLDYQGMLPVCPLILGSTTTSTGPCKTCTTPAQGNSMFPSCCCTKPTDGNCTCIPIPSSWAFAKYLWEWASVRFSWLSLLVPFVQWFVGLSPTVWLSAIWMMWYWGPSLYSIVSSFIPLLPIFFCLWVYI.

Methionine 1 carries the N-acetylmethionine modification. Disordered stretches follow at residues 1–20 and 85–114; these read MGGWSSKPRKGMGTNLSVPN and LTPVSTIPPPASANRQSGRQPTPISPPLRD. A lipid anchor (N-myristoyl glycine; by host) is attached at glycine 2. The segment at 2–119 is pre-S1; that stretch reads GGWSSKPRKG…PPLRDSHPQA (118 aa). Positions 2–174 are pre-S; the sequence is GGWSSKPRKG…SARTGDPVTN (173 aa). Residues 2 to 181 are Virion surface; in external conformation-facing; the sequence is GGWSSKPRKG…VTNMENITSG (180 aa). The Intravirion; in internal conformation portion of the chain corresponds to 2-253; the sequence is GGWSSKPRKG…PGYRWMCLRR (252 aa). Tryptophan 4 carries N-linked (GlcNAc...) asparagine glycosylation. Residues 97–106 show a composition bias toward polar residues; it reads ANRQSGRQPT. Positions 120-174 are pre-S2; that stretch reads MQWNSTAFHQALQDPRVRGLYFPAGGSSSGTVNPAPNIASHISSISARTGDPVTN. A helical transmembrane segment spans residues 182–202; that stretch reads FLGPLPVLQAGFFLLTRILTI. Topologically, residues 203 to 253 are intravirion; in external conformation; that stretch reads PQSLDSWWTSLNFLGGSPVCLGQNSRSPTSNHSPTSCPPICPGYRWMCLRR. The helical transmembrane segment at 254 to 274 threads the bilayer; it reads FIIFLFILLLCLIFLLVLLDY. Over 275-348 the chain is Virion surface; the sequence is QGMLPVCPLI…WASVRFSWLS (74 aa). Asparagine 320 is a glycosylation site (N-linked (GlcNAc...) asparagine; by host). A helical membrane pass occupies residues 349-369; sequence LLVPFVQWFVGLSPTVWLSAI. At 370 to 375 the chain is on the intravirion side; that stretch reads WMMWYW. A helical transmembrane segment spans residues 376 to 398; it reads GPSLYSIVSSFIPLLPIFFCLWV. The Virion surface segment spans residues 399–400; sequence YI.

This sequence belongs to the orthohepadnavirus major surface antigen family. In its internal form (Li-HBsAg), interacts with the capsid protein and with the isoform S. Interacts with host chaperone CANX. As to quaternary structure, associates with host chaperone CANX through its pre-S2 N glycan; this association may be essential for isoform M proper secretion. In terms of assembly, interacts with isoform L. Interacts with the antigens of satellite virus HDV (HDVAgs); this interaction is required for encapsidation of HDV genomic RNA. Isoform M is N-terminally acetylated by host at a ratio of 90%, and N-glycosylated by host at the pre-S2 region. Post-translationally, myristoylated.

Its subcellular location is the virion membrane. Functionally, the large envelope protein exists in two topological conformations, one which is termed 'external' or Le-HBsAg and the other 'internal' or Li-HBsAg. In its external conformation the protein attaches the virus to cell receptors and thereby initiating infection. This interaction determines the species specificity and liver tropism. This attachment induces virion internalization predominantly through caveolin-mediated endocytosis. The large envelope protein also assures fusion between virion membrane and endosomal membrane. In its internal conformation the protein plays a role in virion morphogenesis and mediates the contact with the nucleocapsid like a matrix protein. Its function is as follows. The middle envelope protein plays an important role in the budding of the virion. It is involved in the induction of budding in a nucleocapsid independent way. In this process the majority of envelope proteins bud to form subviral lipoprotein particles of 22 nm of diameter that do not contain a nucleocapsid. The chain is Large envelope protein from Homo sapiens (Human).